We begin with the raw amino-acid sequence, 151 residues long: Deoxyuridine 5'-triphosphate nucleotidohydrolase (151 aa).

Residues 70 to 72 (RSG), N83, 87 to 89 (LID), and M97 contribute to the substrate site.

It belongs to the dUTPase family. Mg(2+) serves as cofactor.

The catalysed reaction is dUTP + H2O = dUMP + diphosphate + H(+). It participates in pyrimidine metabolism; dUMP biosynthesis; dUMP from dCTP (dUTP route): step 2/2. In terms of biological role, this enzyme is involved in nucleotide metabolism: it produces dUMP, the immediate precursor of thymidine nucleotides and it decreases the intracellular concentration of dUTP so that uracil cannot be incorporated into DNA. In Pseudomonas fluorescens (strain ATCC BAA-477 / NRRL B-23932 / Pf-5), this protein is Deoxyuridine 5'-triphosphate nucleotidohydrolase.